The following is a 540-amino-acid chain: Phosphoenolpyruvate carboxykinase (ATP) (540 aa).

Substrate is bound at residue arginine 65. Lysine 87 bears the N6-acetyllysine mark. Substrate-binding residues include tyrosine 207 and lysine 213. Residues lysine 213, histidine 232, and 248-256 contribute to the ATP site; that span reads GLSGTGKTT. Residues lysine 213 and histidine 232 each contribute to the Mn(2+) site. Aspartate 269 is a Mn(2+) binding site. Residues glutamate 297, arginine 333, 449 to 450, and threonine 455 contribute to the ATP site; that span reads RI. Position 333 (arginine 333) interacts with substrate. Lysine 523 is subject to N6-acetyllysine.

Belongs to the phosphoenolpyruvate carboxykinase (ATP) family. Monomer. It depends on Mn(2+) as a cofactor.

It localises to the cytoplasm. The catalysed reaction is oxaloacetate + ATP = phosphoenolpyruvate + ADP + CO2. It participates in carbohydrate biosynthesis; gluconeogenesis. Its function is as follows. Involved in the gluconeogenesis. Catalyzes the conversion of oxaloacetate (OAA) to phosphoenolpyruvate (PEP) through direct phosphoryl transfer between the nucleoside triphosphate and OAA. The chain is Phosphoenolpyruvate carboxykinase (ATP) from Escherichia fergusonii (strain ATCC 35469 / DSM 13698 / CCUG 18766 / IAM 14443 / JCM 21226 / LMG 7866 / NBRC 102419 / NCTC 12128 / CDC 0568-73).